The chain runs to 498 residues: Glycerol kinase 1 (498 aa).

Threonine 12 contacts ADP. 3 residues coordinate ATP: threonine 12, threonine 13, and serine 14. Sn-glycerol 3-phosphate is bound at residue threonine 12. Position 16 (arginine 16) interacts with ADP. Sn-glycerol 3-phosphate contacts are provided by arginine 82, glutamate 83, tyrosine 134, and aspartate 243. Glycerol-binding residues include arginine 82, glutamate 83, tyrosine 134, aspartate 243, and glutamine 244. 2 residues coordinate ADP: threonine 265 and glycine 308. Residues threonine 265, glycine 308, glutamine 312, and glycine 409 each coordinate ATP. Residues glycine 409 and asparagine 413 each coordinate ADP.

It belongs to the FGGY kinase family. Homotetramer and homodimer (in equilibrium).

It carries out the reaction glycerol + ATP = sn-glycerol 3-phosphate + ADP + H(+). It participates in polyol metabolism; glycerol degradation via glycerol kinase pathway; sn-glycerol 3-phosphate from glycerol: step 1/1. Activated by phosphorylation and inhibited by fructose 1,6-bisphosphate (FBP). Functionally, key enzyme in the regulation of glycerol uptake and metabolism. Catalyzes the phosphorylation of glycerol to yield sn-glycerol 3-phosphate. The polypeptide is Glycerol kinase 1 (Clostridium tetani (strain Massachusetts / E88)).